Reading from the N-terminus, the 268-residue chain is Glutamate racemase (268 aa).

Residues 14 to 15 (DS) and 46 to 47 (YG) contribute to the substrate site. Catalysis depends on cysteine 78, which acts as the Proton donor/acceptor. Residue 79-80 (NT) participates in substrate binding. Catalysis depends on cysteine 192, which acts as the Proton donor/acceptor. 193 to 194 (TH) is a substrate binding site.

Belongs to the aspartate/glutamate racemases family.

It catalyses the reaction L-glutamate = D-glutamate. Its pathway is cell wall biogenesis; peptidoglycan biosynthesis. In terms of biological role, provides the (R)-glutamate required for cell wall biosynthesis. The polypeptide is Glutamate racemase (Sphingopyxis alaskensis (strain DSM 13593 / LMG 18877 / RB2256) (Sphingomonas alaskensis)).